A 79-amino-acid polypeptide reads, in one-letter code: Serine protease inhibitor Kazal-type 1 (79 aa).

A signal peptide spans 1 to 23; sequence MKVASIFLLTALVLMSLSGNSGA. One can recognise a Kazal-like domain in the interval 26-79; it reads LGREAKCTNEVNGCPRIYNPVCGTDGVTYSNECLLCMENKERQTPVLIQKSGPC. Disulfide bonds link Cys32/Cys61, Cys39/Cys58, and Cys47/Cys79.

It localises to the secreted. Functionally, serine protease inhibitor which exhibits anti-trypsin activity. In the pancreas, protects against trypsin-catalyzed premature activation of zymogens. In the male reproductive tract, binds to sperm heads where it modulates sperm capacitance by inhibiting calcium uptake and nitrogen oxide (NO) production. This chain is Serine protease inhibitor Kazal-type 1 (SPINK1), found in Bos taurus (Bovine).